Here is a 60-residue protein sequence, read N- to C-terminus: MKNNKNLFDLEIKKETSQNTDELEPQTAGPAIRASVKQCQKTLKATRLFTVSCKGKNGCK.

A propeptide spanning residues M1–Q26 is cleaved from the precursor. Residues M1–G29 form a disordered region. T27 is modified (2-oxobutanoic acid). Positions S35–C39 form a cross-link, lanthionine (Ser-Cys). A 2,3-didehydrobutyrine mark is found at T42 and T46. The segment at residues T50–C53 is a cross-link (beta-methyllanthionine (Thr-Cys)). The lanthionine (Ser-Cys) cross-link spans S52–C59.

This sequence belongs to the type A lantibiotic family. Post-translationally, maturation of lantibiotics involves the enzymatic conversion of Thr, and Ser into dehydrated AA and the formation of thioether bonds with cysteine. This is followed by membrane translocation and cleavage of the modified precursor. After proteolysis of the propeptide, the N-terminal 2,3-didehydrobutyrine hydrolyzes to 2-oxobutanoic acid, possibly spontaneously.

Functionally, lanthionine-containing peptide antibiotic (lantibiotic) active on Gram-positive bacteria. The bactericidal activity of lantibiotics is based on depolarization of energized bacterial cytoplasmic membranes, initiated by the formation of aqueous transmembrane pores. The protein is Lantibiotic Pep5 (pepA) of Staphylococcus epidermidis.